We begin with the raw amino-acid sequence, 517 residues long: 2,4,6-trichlorophenol monooxygenase (517 aa).

The protein belongs to the FADH(2)-utilizing monooxygenase family. In terms of assembly, homotetramer in solution.

It catalyses the reaction 2,4,6-trichlorophenol + FADH2 + O2 = 2-chloro-6-hydroxy-1,4-benzoquinone + FAD + 2 chloride + 3 H(+). The catalysed reaction is 2,4,6-trichlorophenol + FADH2 + O2 = 2,6-dichlorobenzoquinone + FAD + chloride + H2O + H(+). The enzyme catalyses 2,6-dichlorobenzoquinone + H2O = 2-chloro-6-hydroxy-1,4-benzoquinone + chloride + 2 H(+). It participates in aromatic compound metabolism. It functions in the pathway xenobiotic degradation. Its function is as follows. Involved in the degradation of 2,4,6-trichlorophenol (2,4,6-TCP). Catalyzes the conversion of 2,4,6-TCP to 6-chlorohydroxyquinol (6-CHQ). The monooxygenase oxidizes 2,4,6-TCP to 2,6-dichloroquinone (2,6-DCBQ), which remains with the enzyme and is hydrolyzed to 2-chlorohydroxyquinone. 2-chlorohydroxyquinone is chemically reduced by ascorbate and NADH to 6-chlorohydroxyquinol (6-CHQ). This is 2,4,6-trichlorophenol monooxygenase from Cupriavidus pinatubonensis (strain JMP 134 / LMG 1197) (Cupriavidus necator (strain JMP 134)).